The sequence spans 607 residues: 1-deoxy-D-xylulose-5-phosphate synthase (607 aa).

Thiamine diphosphate-binding positions include His63 and 104 to 106 (GHS). Asp135 serves as a coordination point for Mg(2+). Thiamine diphosphate contacts are provided by residues 136–137 (GA), Asn164, Tyr271, and Glu351. Asn164 lines the Mg(2+) pocket.

This sequence belongs to the transketolase family. DXPS subfamily. Homodimer. It depends on Mg(2+) as a cofactor. Thiamine diphosphate serves as cofactor.

The catalysed reaction is D-glyceraldehyde 3-phosphate + pyruvate + H(+) = 1-deoxy-D-xylulose 5-phosphate + CO2. It functions in the pathway metabolic intermediate biosynthesis; 1-deoxy-D-xylulose 5-phosphate biosynthesis; 1-deoxy-D-xylulose 5-phosphate from D-glyceraldehyde 3-phosphate and pyruvate: step 1/1. In terms of biological role, catalyzes the acyloin condensation reaction between C atoms 2 and 3 of pyruvate and glyceraldehyde 3-phosphate to yield 1-deoxy-D-xylulose-5-phosphate (DXP). The chain is 1-deoxy-D-xylulose-5-phosphate synthase from Campylobacter hominis (strain ATCC BAA-381 / DSM 21671 / CCUG 45161 / LMG 19568 / NCTC 13146 / CH001A).